A 151-amino-acid chain; its full sequence is NADPH-dependent 7-cyano-7-deazaguanine reductase (151 aa).

The Thioimide intermediate role is filled by Cys51. Asp58 functions as the Proton donor in the catalytic mechanism. Residues 73–75 (VES) and 92–93 (HE) each bind substrate.

This sequence belongs to the GTP cyclohydrolase I family. QueF type 1 subfamily.

The protein localises to the cytoplasm. The enzyme catalyses 7-aminomethyl-7-carbaguanine + 2 NADP(+) = 7-cyano-7-deazaguanine + 2 NADPH + 3 H(+). The protein operates within tRNA modification; tRNA-queuosine biosynthesis. Its function is as follows. Catalyzes the NADPH-dependent reduction of 7-cyano-7-deazaguanine (preQ0) to 7-aminomethyl-7-deazaguanine (preQ1). The chain is NADPH-dependent 7-cyano-7-deazaguanine reductase from Bacteroides fragilis (strain ATCC 25285 / DSM 2151 / CCUG 4856 / JCM 11019 / LMG 10263 / NCTC 9343 / Onslow / VPI 2553 / EN-2).